We begin with the raw amino-acid sequence, 274 residues long: Thiazole synthase (274 aa).

The Schiff-base intermediate with DXP role is filled by lysine 115. 1-deoxy-D-xylulose 5-phosphate contacts are provided by residues glycine 176, 202–203 (AG), and 224–225 (NS).

Belongs to the ThiG family. Homotetramer. Forms heterodimers with either ThiH or ThiS.

It is found in the cytoplasm. It carries out the reaction [ThiS sulfur-carrier protein]-C-terminal-Gly-aminoethanethioate + 2-iminoacetate + 1-deoxy-D-xylulose 5-phosphate = [ThiS sulfur-carrier protein]-C-terminal Gly-Gly + 2-[(2R,5Z)-2-carboxy-4-methylthiazol-5(2H)-ylidene]ethyl phosphate + 2 H2O + H(+). The protein operates within cofactor biosynthesis; thiamine diphosphate biosynthesis. In terms of biological role, catalyzes the rearrangement of 1-deoxy-D-xylulose 5-phosphate (DXP) to produce the thiazole phosphate moiety of thiamine. Sulfur is provided by the thiocarboxylate moiety of the carrier protein ThiS. In vitro, sulfur can be provided by H(2)S. This chain is Thiazole synthase, found in Psychrobacter arcticus (strain DSM 17307 / VKM B-2377 / 273-4).